The sequence spans 159 residues: 6,7-dimethyl-8-ribityllumazine synthase (159 aa).

5-amino-6-(D-ribitylamino)uracil is bound by residues Phe22, 56 to 58, and 80 to 82; these read AFE and AVI. 85-86 serves as a coordination point for (2S)-2-hydroxy-3-oxobutyl phosphate; sequence AT. His88 acts as the Proton donor in catalysis. Phe113 is a 5-amino-6-(D-ribitylamino)uracil binding site. (2S)-2-hydroxy-3-oxobutyl phosphate is bound at residue Arg127.

Belongs to the DMRL synthase family.

The catalysed reaction is (2S)-2-hydroxy-3-oxobutyl phosphate + 5-amino-6-(D-ribitylamino)uracil = 6,7-dimethyl-8-(1-D-ribityl)lumazine + phosphate + 2 H2O + H(+). The protein operates within cofactor biosynthesis; riboflavin biosynthesis; riboflavin from 2-hydroxy-3-oxobutyl phosphate and 5-amino-6-(D-ribitylamino)uracil: step 1/2. In terms of biological role, catalyzes the formation of 6,7-dimethyl-8-ribityllumazine by condensation of 5-amino-6-(D-ribitylamino)uracil with 3,4-dihydroxy-2-butanone 4-phosphate. This is the penultimate step in the biosynthesis of riboflavin. The protein is 6,7-dimethyl-8-ribityllumazine synthase of Lactiplantibacillus plantarum (strain ATCC BAA-793 / NCIMB 8826 / WCFS1) (Lactobacillus plantarum).